An 87-amino-acid chain; its full sequence is Exodeoxyribonuclease 7 small subunit (87 aa).

Belongs to the XseB family. In terms of assembly, heterooligomer composed of large and small subunits.

It is found in the cytoplasm. The catalysed reaction is Exonucleolytic cleavage in either 5'- to 3'- or 3'- to 5'-direction to yield nucleoside 5'-phosphates.. Its function is as follows. Bidirectionally degrades single-stranded DNA into large acid-insoluble oligonucleotides, which are then degraded further into small acid-soluble oligonucleotides. The chain is Exodeoxyribonuclease 7 small subunit from Halorhodospira halophila (strain DSM 244 / SL1) (Ectothiorhodospira halophila (strain DSM 244 / SL1)).